The primary structure comprises 1357 residues: DNA-directed RNA polymerase subunit beta (1357 aa).

The protein belongs to the RNA polymerase beta chain family. As to quaternary structure, the RNAP catalytic core consists of 2 alpha, 1 beta, 1 beta' and 1 omega subunit. When a sigma factor is associated with the core the holoenzyme is formed, which can initiate transcription.

It carries out the reaction RNA(n) + a ribonucleoside 5'-triphosphate = RNA(n+1) + diphosphate. Functionally, DNA-dependent RNA polymerase catalyzes the transcription of DNA into RNA using the four ribonucleoside triphosphates as substrates. The polypeptide is DNA-directed RNA polymerase subunit beta (Pseudomonas syringae pv. tomato (strain ATCC BAA-871 / DC3000)).